A 216-amino-acid chain; its full sequence is MNAPRFAAPARRTKKLPPLRVGIGGPVGSGKTTLLEMLCKGMRERYDLVAITNDIYTKEDQRLLTIAGALPEARIMGVETGGCPHTAIREDASINLEAVERMLVRFPDADIVFIESGGDNLAATFSPELSDLTIYVIDVAGGEKIPRKGGPGITKSDLLVINKTDLAPLVGANLEVMASDTRKMRGERPYVMCNLKALDGVADVIAFIENKGLLTV.

Glycine 25 to threonine 32 is a binding site for GTP.

Belongs to the SIMIBI class G3E GTPase family. UreG subfamily. In terms of assembly, homodimer. UreD, UreF and UreG form a complex that acts as a GTP-hydrolysis-dependent molecular chaperone, activating the urease apoprotein by helping to assemble the nickel containing metallocenter of UreC. The UreE protein probably delivers the nickel.

Its subcellular location is the cytoplasm. Facilitates the functional incorporation of the urease nickel metallocenter. This process requires GTP hydrolysis, probably effectuated by UreG. The chain is Urease accessory protein UreG from Burkholderia pseudomallei (strain 1710b).